Reading from the N-terminus, the 366-residue chain is Inactive protein RESTRICTED TEV MOVEMENT 2 (366 aa).

The 108-residue stretch at 14 to 121 (VQYEDFVPKS…LPETSRTEAA (108 aa)) folds into the sHSP domain. The stretch at 129–133 (LEEKR) is one A-1 repeat. The segment at 129-220 (LEEKRLLEES…LEERRLEERK (92 aa)) is 6 X 5 AA repeats A of L-E-E-[SKR]-[ERK]. The stretch at 135-139 (LEESR) is one A-2 repeat. Residues 156-160 (LEEKE) form an A-3 repeat. The stretch at 163 to 176 (IRKLQEEAKAKEEA) is one B-1 repeat. The interval 163 to 206 (IRKLQEEAKAKEEAEMRKLQEEAKANEEAAAKKLQEEIEAKEKL) is 3 X 14 AA repeats B of [IMA]-[RK]-K-L-Q-E-E-A-K-A-K-E-[EK]-[LA]. The B-2 repeat unit spans residues 178 to 191 (MRKLQEEAKANEEA). Residues 193–205 (AKKLQEEIEAKEK) form a B-3 repeat. The A-4 repeat unit spans residues 206 to 210 (LEERK). The A-5 repeat unit spans residues 211–215 (LEERR). The A-6 repeat unit spans residues 216-220 (LEERK). The helical transmembrane segment at 322–342 (LMMNVGVAALVIFALGAYVSY) threads the bilayer. The interval 345–366 (CSSSSSSSSSSPSSSSSSTKPE) is disordered. A compositionally biased stretch (low complexity) spans 346 to 366 (SSSSSSSSSSPSSSSSSTKPE).

Belongs to the small heat shock protein (HSP20) family.

The protein localises to the cell membrane. Functionally, seems to not be involved in heat resistance. Unable to mediate restriction of long-distance movement of the pathogenic tobacco etch virus (TEV) without causing a hypersensitive response or inducing systemic acquired resistance. The protein is Inactive protein RESTRICTED TEV MOVEMENT 2 (RTM2) of Arabidopsis thaliana (Mouse-ear cress).